The chain runs to 447 residues: Glutamate-1-semialdehyde 2,1-aminomutase (447 aa).

An N6-(pyridoxal phosphate)lysine modification is found at Lys-277.

Belongs to the class-III pyridoxal-phosphate-dependent aminotransferase family. HemL subfamily. Homodimer. Pyridoxal 5'-phosphate serves as cofactor.

Its subcellular location is the cytoplasm. The enzyme catalyses (S)-4-amino-5-oxopentanoate = 5-aminolevulinate. It participates in porphyrin-containing compound metabolism; protoporphyrin-IX biosynthesis; 5-aminolevulinate from L-glutamyl-tRNA(Glu): step 2/2. The protein is Glutamate-1-semialdehyde 2,1-aminomutase of Arthrobacter sp. (strain FB24).